Here is a 310-residue protein sequence, read N- to C-terminus: Altered inheritance of mitochondria protein 46, mitochondrial (310 aa).

The N-terminal 20 residues, M1–R20, are a transit peptide targeting the mitochondrion.

The protein belongs to the AIM18/AIM46 family.

Its subcellular location is the mitochondrion. The chain is Altered inheritance of mitochondria protein 46, mitochondrial (AIM46) from Saccharomyces cerevisiae (strain JAY291) (Baker's yeast).